The chain runs to 210 residues: Protein RFS1 (210 aa).

One can recognise a Flavodoxin-like domain in the interval 4–203 (VAILIYSVDD…RVHQLQGKAF (200 aa)).

This sequence belongs to the WrbA family.

The protein resides in the cytoplasm. It localises to the membrane raft. In Saccharomyces cerevisiae (strain ATCC 204508 / S288c) (Baker's yeast), this protein is Protein RFS1 (RFS1).